The chain runs to 195 residues: SPI-2 type 3 secretion system translocon protein SctB (195 aa).

Residues 44–80 (KLMELAKKLRDIMRSYNVEKQRLAWELQVNVLQTQMK) adopt a coiled-coil conformation. The next 3 membrane-spanning stretches (helical) occupy residues 90–110 (MITAGGAMLSGVLTIGLGAVG), 115–135 (LIAGQAVGHTAGGVMGLGAGV), and 170–190 (EIMQQIIGVGSSLVTVLAEIL).

This sequence belongs to the SctB/EspB family. In terms of assembly, the core secretion machinery of the T3SS is composed of approximately 20 different proteins, including cytoplasmic components, a base, an export apparatus and a needle. This subunit is involved in the formation of a pore, called the translocon, in host membrane. May form a complex with SseB and SseC/SctE2. SseB is required for correct localization of SseD/SctB2 on the bacterial cell surface. Binds to the chaperone SseA.

The protein localises to the secreted. Its subcellular location is the cell surface. It is found in the host membrane. Its function is as follows. Component of the type III secretion system 2 (SPI-2 T3SS), also called injectisome, which is used to inject bacterial effector proteins into eukaryotic host cells. SseC/SctE2 and SseD/SctB2 are inserted into the host membrane where they form a pore and allow the translocation of effector proteins into the cytosol of target cells. In terms of biological role, required for the translocation of SPI-2 effector proteins. Required for systemic Salmonella infection of the mouse. Essential for SpvB-induced actin depolymerization in the host cell cytoplasm. This is SPI-2 type 3 secretion system translocon protein SctB from Salmonella typhimurium (strain LT2 / SGSC1412 / ATCC 700720).